A 602-amino-acid chain; its full sequence is RNA-binding NOB1-like protein (602 aa).

Residues 1–25 (MDPKPTSMWSSIVKKDPPSKPPVND) form a disordered region. A PINc domain is found at 48–134 (VVDANAIIEG…LKLIALSYTL (87 aa)). Disordered regions lie at residues 258 to 278 (SQGQ…VSRS) and 301 to 331 (IQKD…GEDI). The span at 301 to 329 (IQKDQEADKARHTKEANETHAKDSGKNGE) shows a compositional bias: basic and acidic residues. A coiled-coil region spans residues 331–365 (ISSILKDMRLEEESLRALQEETEETNAEATLINGE). The NOB1 zinc-finger motif lies at 452–522 (IRQLHRWILK…QYSIPMPKGG (71 aa)). Residues C462, C465, C477, and C480 each contribute to the Zn(2+) site.

Belongs to the NOB1 family. In terms of assembly, component of the small ribosomal subunit, ribosomal RNA processing complex (SSU RRP complex). Highly expressed in flowers and siliques and at lower levels in roots, hypocotyls, stems, leaves and seeds.

The protein localises to the nucleus. The protein resides in the nucleoplasm. It localises to the cytoplasm. Essential protein required during embryogenesis and pollen development. Endonuclease cleaving pre-rRNA at the 3' end of the mature 18S rRNA (D-site); cleaves 20S pre-rRNA in the cytoplasm. Required for processing of 20S pre-rRNA precursor and biogenesis of 40S ribosomal subunits. The polypeptide is RNA-binding NOB1-like protein (Arabidopsis thaliana (Mouse-ear cress)).